The primary structure comprises 360 residues: Flavone O-methyltransferase 1 (360 aa).

Met127–Leu133 contacts substrate. Residues Ala159–Met177 form a substrate binding region. 5 residues coordinate S-adenosyl-L-methionine: Gly205, Asp228, Asp248, Met249, and Lys262. His266 (proton acceptor) is an active-site residue.

Belongs to the class I-like SAM-binding methyltransferase superfamily. Cation-independent O-methyltransferase family. COMT subfamily. As to quaternary structure, homodimer.

Flavone-specific O-methyltransferase with a preference for flavones &gt; flavonols. Active with tricetin, luteolin, quercitin and eriodictyol. Very low activity with phenylpropanoids (5-hydroxyferulic acid and caffeic acid). Catalyzes the sequential O-methylation of tricetin via 3'-O-methyltricetin, 3',5'-O-methyltricetin to 3',4',5'-O-trimethyltricetin. This Triticum aestivum (Wheat) protein is Flavone O-methyltransferase 1 (OMT1).